The primary structure comprises 473 residues: Cannabinoid receptor 1 (473 aa).

Over 1–118 (MKSILDGLAD…CFMILTASQQ (118 aa)) the chain is Extracellular. The required for mitochondrial localization stretch occupies residues 2-23 (KSILDGLADTTFRTITTDLLYM). N-linked (GlcNAc...) asparagine glycans are attached at residues Asn79 and Asn85. The chain crosses the membrane as a helical span at residues 119–144 (LIIAVLSLTLGTFTVLENFLVLCVIL). Topologically, residues 145 to 156 (QSRTLRCRPSYH) are cytoplasmic. Residues 157 to 177 (FIGSLAVADLLGSVIFVYSFL) form a helical membrane-spanning segment. Over 178 to 189 (DFHVFHRKDSSN) the chain is Extracellular. A helical transmembrane segment spans residues 190-214 (VFLFKLGGVTASFTASVGSLFLTAI). Residues 215–234 (DRYISIHRPLAYKRIVTRTK) lie on the Cytoplasmic side of the membrane. The chain crosses the membrane as a helical span at residues 235 to 257 (AVIAFCVMWTIAIIIAVLPLLGW). The Extracellular portion of the chain corresponds to 258–275 (NCKKLKSVCSDIFPLIDE). The chain crosses the membrane as a helical span at residues 276 to 301 (NYLMFWIGVTSILLLFIVYAYVYILW). Over 302–346 (KAHSHAVRMLQRGTQKSIIIHTSEDGKVQITRPEQTRMDIRLAKT) the chain is Cytoplasmic. Residues 347-367 (LVLILVVLIICWGPLLAIMVY) form a helical membrane-spanning segment. The Extracellular segment spans residues 368–379 (DVFGKMNNPIKT). The chain crosses the membrane as a helical span at residues 380 to 401 (VFAFCSMLCLMDSTVNPIIYAL). Topologically, residues 402–473 (RSQDLRHAFL…VSTETSGEAV (72 aa)) are cytoplasmic. Cys417 is lipidated: S-palmitoyl cysteine.

Belongs to the G-protein coupled receptor 1 family. In terms of processing, palmitoylation at Cys-417 is important for recruitment at both plasma membrane and lipid rafts and association with G protein alpha subunits.

The protein localises to the cell membrane. The protein resides in the mitochondrion outer membrane. It is found in the cell projection. Its subcellular location is the axon. It localises to the presynapse. Its activity is regulated as follows. Hemopressin, a peptide derived from hemoglobin subunit alpha (HBA1 and/or HBA2), acts as an antagonist peptide: hemopressin-binding efficiently blocks cannabinoid receptor CNR1 and subsequent signaling. G-protein coupled receptor for cannabinoids. Mediates many cannabinoid-induced effects in the central nervous system (CNS), as well as in peripheral tissues. Regulates cellular respiration and energy production in response to cannabinoids. Signaling typically involves reduction in cyclic AMP. This is Cannabinoid receptor 1 (CNR1) from Taricha granulosa (Roughskin newt).